Reading from the N-terminus, the 98-residue chain is NADH-ubiquinone oxidoreductase chain 4L (98 aa).

Helical transmembrane passes span 1–21, 29–49, and 61–81; these read MSLTYMNMLMAFTTSLLGLLM, SLLCLEGMMLSLFVMVTITIL, and IILLVFAACEAALGLSLLVMV.

Belongs to the complex I subunit 4L family. As to quaternary structure, core subunit of respiratory chain NADH dehydrogenase (Complex I) which is composed of 45 different subunits.

It localises to the mitochondrion inner membrane. The enzyme catalyses a ubiquinone + NADH + 5 H(+)(in) = a ubiquinol + NAD(+) + 4 H(+)(out). Core subunit of the mitochondrial membrane respiratory chain NADH dehydrogenase (Complex I) which catalyzes electron transfer from NADH through the respiratory chain, using ubiquinone as an electron acceptor. Part of the enzyme membrane arm which is embedded in the lipid bilayer and involved in proton translocation. In Ectophylla alba (White bat), this protein is NADH-ubiquinone oxidoreductase chain 4L (MT-ND4L).